Reading from the N-terminus, the 332-residue chain is Phospho-N-acetylmuramoyl-pentapeptide-transferase (332 aa).

The next 8 helical transmembrane spans lie at 9–29 (IYTI…IIPF), 55–75 (TIGG…AGLI), 79–99 (LWVA…DDFI), 115–135 (MSLQ…ISVM), 155–175 (IPQY…VVVA), 196–216 (IVAA…LAIF), 253–273 (AVAI…IYFA), and 312–332 (VVIV…LGLN).

It belongs to the glycosyltransferase 4 family. MraY subfamily. Mg(2+) serves as cofactor.

It is found in the cell membrane. The catalysed reaction is UDP-N-acetyl-alpha-D-muramoyl-L-alanyl-gamma-D-glutamyl-meso-2,6-diaminopimeloyl-D-alanyl-D-alanine + di-trans,octa-cis-undecaprenyl phosphate = di-trans,octa-cis-undecaprenyl diphospho-N-acetyl-alpha-D-muramoyl-L-alanyl-D-glutamyl-meso-2,6-diaminopimeloyl-D-alanyl-D-alanine + UMP. The protein operates within cell wall biogenesis; peptidoglycan biosynthesis. In terms of biological role, catalyzes the initial step of the lipid cycle reactions in the biosynthesis of the cell wall peptidoglycan: transfers peptidoglycan precursor phospho-MurNAc-pentapeptide from UDP-MurNAc-pentapeptide onto the lipid carrier undecaprenyl phosphate, yielding undecaprenyl-pyrophosphoryl-MurNAc-pentapeptide, known as lipid I. The protein is Phospho-N-acetylmuramoyl-pentapeptide-transferase of Alkaliphilus oremlandii (strain OhILAs) (Clostridium oremlandii (strain OhILAs)).